A 258-amino-acid polypeptide reads, in one-letter code: Global transcriptional regulator CodY (258 aa).

Residues 1 to 156 (MSTLLDKTRK…SATIVGLEIL (156 aa)) are GAF domain. The H-T-H motif DNA-binding region spans 204–223 (ASKIADKVGITRSVIVNALR).

The protein belongs to the CodY family.

It is found in the cytoplasm. Its function is as follows. DNA-binding global transcriptional regulator which is involved in the adaptive response to starvation and acts by directly or indirectly controlling the expression of numerous genes in response to nutrient availability. During rapid exponential growth, CodY is highly active and represses genes whose products allow adaptation to nutrient depletion. This is Global transcriptional regulator CodY from Clostridium kluyveri (strain NBRC 12016).